Reading from the N-terminus, the 307-residue chain is PCP degradation transcriptional activation protein (307 aa).

The region spanning leucine 6–threonine 63 is the HTH lysR-type domain. Residues alanine 23 to alanine 42 constitute a DNA-binding region (H-T-H motif).

This sequence belongs to the LysR transcriptional regulatory family.

Functionally, transcriptional activator for the pcpA, pcpB and pcpE genes for pentachlorophenol (PCP) degradation. Essential for PCP degradation. The chain is PCP degradation transcriptional activation protein (pcpR) from Sphingobium chlorophenolicum.